The primary structure comprises 861 residues: Rod cGMP-specific 3',5'-cyclic phosphodiesterase subunit alpha (861 aa).

An N-acetylglycine modification is found at G2. GAF domains follow at residues 73–222 and 254–431; these read QAER…NLIM and DIER…GWSV. The PDEase domain maps to 483-816; sequence EEEELAEILQ…KEWKALADEY (334 aa). The Proton donor role is filled by H559. A divalent metal cation-binding residues include H563, H599, D600, and D720. The disordered stretch occupies residues 821–861; it reads KALEEEKQKQQTAKQGAAGDQPGGNPSPAGGAPASKSCCIQ. Positions 830–861 are enriched in low complexity; sequence QQTAKQGAAGDQPGGNPSPAGGAPASKSCCIQ. C858 bears the Cysteine methyl ester mark. A lipid anchor (S-farnesyl cysteine) is attached at C858. The propeptide at 859 to 861 is removed in mature form; that stretch reads CIQ.

This sequence belongs to the cyclic nucleotide phosphodiesterase family. Oligomer composed of two catalytic chains (alpha and beta), an inhibitory chain (gamma) and the delta chain. Requires a divalent metal cation as cofactor.

Its subcellular location is the cell membrane. The protein resides in the cell projection. It localises to the cilium. It is found in the photoreceptor outer segment. It carries out the reaction 3',5'-cyclic GMP + H2O = GMP + H(+). Functionally, rod-specific cGMP phosphodiesterase that catalyzes the hydrolysis of 3',5'-cyclic GMP. This protein participates in processes of transmission and amplification of the visual signal. The polypeptide is Rod cGMP-specific 3',5'-cyclic phosphodiesterase subunit alpha (Canis lupus familiaris (Dog)).